Here is a 215-residue protein sequence, read N- to C-terminus: Pyrrolidone-carboxylate peptidase (215 aa).

Active-site residues include Glu-80, Cys-143, and His-167.

Belongs to the peptidase C15 family. In terms of assembly, homotetramer.

It localises to the cytoplasm. The catalysed reaction is Release of an N-terminal pyroglutamyl group from a polypeptide, the second amino acid generally not being Pro.. Functionally, removes 5-oxoproline from various penultimate amino acid residues except L-proline. The sequence is that of Pyrrolidone-carboxylate peptidase from Bacillus cereus (strain Q1).